The following is a 296-amino-acid chain: Glycine--tRNA ligase alpha subunit (296 aa).

This sequence belongs to the class-II aminoacyl-tRNA synthetase family. In terms of assembly, tetramer of two alpha and two beta subunits.

The protein resides in the cytoplasm. It catalyses the reaction tRNA(Gly) + glycine + ATP = glycyl-tRNA(Gly) + AMP + diphosphate. The chain is Glycine--tRNA ligase alpha subunit from Desulfitobacterium hafniense (strain DSM 10664 / DCB-2).